The following is a 208-amino-acid chain: Sodium/potassium-transporting ATPase subunit beta-1-interacting protein 4 (208 aa).

A run of 3 helical transmembrane segments spans residues 35–55 (APILANFVHIIIVILGLFGTI), 62–82 (VMVYTLWAAVWVTWNVFIICF), and 151–171 (CLQILIALLGFVCGCQVVSVF).

Belongs to the NKAIN family. In terms of assembly, interacts with ATP1B1.

The protein resides in the cell membrane. The protein is Sodium/potassium-transporting ATPase subunit beta-1-interacting protein 4 (NKAIN4) of Homo sapiens (Human).